A 515-amino-acid polypeptide reads, in one-letter code: ATP synthase subunit alpha (515 aa).

171–178 is an ATP binding site; it reads GDRQTGKT.

Belongs to the ATPase alpha/beta chains family. F-type ATPases have 2 components, CF(1) - the catalytic core - and CF(0) - the membrane proton channel. CF(1) has five subunits: alpha(3), beta(3), gamma(1), delta(1), epsilon(1). CF(0) has three main subunits: a(1), b(2) and c(9-12). The alpha and beta chains form an alternating ring which encloses part of the gamma chain. CF(1) is attached to CF(0) by a central stalk formed by the gamma and epsilon chains, while a peripheral stalk is formed by the delta and b chains.

It localises to the cell inner membrane. It carries out the reaction ATP + H2O + 4 H(+)(in) = ADP + phosphate + 5 H(+)(out). Produces ATP from ADP in the presence of a proton gradient across the membrane. The alpha chain is a regulatory subunit. This is ATP synthase subunit alpha from Xanthomonas oryzae pv. oryzae (strain MAFF 311018).